Reading from the N-terminus, the 72-residue chain is Small ribosomal subunit protein bS20 (72 aa).

Belongs to the bacterial ribosomal protein bS20 family.

In terms of biological role, binds directly to 16S ribosomal RNA. The protein is Small ribosomal subunit protein bS20 (rpsT) of Aeromonas salmonicida.